Reading from the N-terminus, the 122-residue chain is MTLGIGNDIIEIERIQANIKKYGQRFLNRVFTKNEQIYCLNRKMPALHLAGRFAAKEAVVKALGTGFSQGISWLDVEILNDANGKPYVSISPLLTQLFASPKLLISISHCHHYATAFAVWSS.

Residues Asp8 and Glu57 each contribute to the Mg(2+) site.

It belongs to the P-Pant transferase superfamily. AcpS family. The cofactor is Mg(2+).

Its subcellular location is the cytoplasm. The catalysed reaction is apo-[ACP] + CoA = holo-[ACP] + adenosine 3',5'-bisphosphate + H(+). Transfers the 4'-phosphopantetheine moiety from coenzyme A to a Ser of acyl-carrier-protein. The sequence is that of Holo-[acyl-carrier-protein] synthase from Protochlamydia amoebophila (strain UWE25).